Consider the following 296-residue polypeptide: Probable cell wall protein PGA41 (296 aa).

Positions 1 to 18 (MKFTIVLFTLISVTVAAA) are cleaved as a signal peptide. A compositionally biased stretch (low complexity) spans 146 to 212 (IASSTKESSS…ITTISSDSST (67 aa)). Positions 146-276 (IASSTKESSS…PNSSQTAPGA (131 aa)) are disordered. Positions 220–245 (QGGGGNSGNNGSNGDGGNDASGGGGV) are enriched in gly residues. 2 N-linked (GlcNAc...) asparagine glycosylation sites follow: asparagine 229 and asparagine 268. A compositionally biased stretch (low complexity) spans 247-274 (NENEQASSPPSSQSSTNSNQPNSSQTAP). Glycine 275 carries GPI-anchor amidated glycine lipidation. The propeptide at 276–296 (AANYLSSVSVGTLMILVLGLI) is removed in mature form.

This sequence belongs to the IHD1 family. In terms of processing, the GPI-anchor is attached to the protein in the endoplasmic reticulum and serves to target the protein to the cell surface. There, the glucosamine-inositol phospholipid moiety is cleaved off and the GPI-modified mannoprotein is covalently attached via its lipidless GPI glycan remnant to the 1,6-beta-glucan of the outer cell wall layer.

It is found in the secreted. The protein localises to the cell wall. It localises to the membrane. Functionally, probable GPI-anchored cell wall protein that may be involved in cell wall organization, hyphal growth, as well as in virulence. The chain is Probable cell wall protein PGA41 (PGA41) from Candida albicans (strain SC5314 / ATCC MYA-2876) (Yeast).